The following is a 96-amino-acid chain: ESAT-6-like protein SAG1039 (96 aa).

Belongs to the WXG100 family. sagEsxA-like subfamily. Homodimer.

The protein is ESAT-6-like protein SAG1039 of Streptococcus agalactiae serotype V (strain ATCC BAA-611 / 2603 V/R).